A 113-amino-acid chain; its full sequence is MNRLDFVDQASLRDDIPVFGPGDTVNVHVKVIEGAKERIQVFKGVVIRRQGGGVRETFTVRKESYGVGVERTFPVHSPNIDHIQVVTRGDVRRAKLYYLRELRGKKAKIKEKR.

Belongs to the bacterial ribosomal protein bL19 family.

Its function is as follows. This protein is located at the 30S-50S ribosomal subunit interface and may play a role in the structure and function of the aminoacyl-tRNA binding site. The sequence is that of Large ribosomal subunit protein bL19 from Mycobacterium avium (strain 104).